The following is a 379-amino-acid chain: Lipid-A-disaccharide synthase (379 aa).

The protein belongs to the LpxB family.

The enzyme catalyses a lipid X + a UDP-2-N,3-O-bis[(3R)-3-hydroxyacyl]-alpha-D-glucosamine = a lipid A disaccharide + UDP + H(+). It functions in the pathway bacterial outer membrane biogenesis; LPS lipid A biosynthesis. Functionally, condensation of UDP-2,3-diacylglucosamine and 2,3-diacylglucosamine-1-phosphate to form lipid A disaccharide, a precursor of lipid A, a phosphorylated glycolipid that anchors the lipopolysaccharide to the outer membrane of the cell. The polypeptide is Lipid-A-disaccharide synthase (Vibrio parahaemolyticus serotype O3:K6 (strain RIMD 2210633)).